The following is a 66-amino-acid chain: Large ribosomal subunit protein bL35 (66 aa).

Over residues 1–16 (MPKQKTHRASAKRFKR) the composition is skewed to basic residues. A disordered region spans residues 1 to 21 (MPKQKTHRASAKRFKRTGSGG).

Belongs to the bacterial ribosomal protein bL35 family.

In Streptococcus agalactiae serotype Ia (strain ATCC 27591 / A909 / CDC SS700), this protein is Large ribosomal subunit protein bL35.